A 66-amino-acid polypeptide reads, in one-letter code: Large ribosomal subunit protein bL33c (66 aa).

This sequence belongs to the bacterial ribosomal protein bL33 family.

It localises to the plastid. The protein localises to the chloroplast. In Eucalyptus globulus subsp. globulus (Tasmanian blue gum), this protein is Large ribosomal subunit protein bL33c.